The following is a 418-amino-acid chain: Pigment epithelium-derived factor (418 aa).

The first 19 residues, 1-19 (MQALVLLLCIGALLGHSSC), serve as a signal peptide directing secretion. Gln-20 is subject to Pyrrolidone carboxylic acid. The disordered stretch occupies residues 20–39 (QNPASPPEEGSPDPDSTGAL). Ser-24 and Ser-114 each carry phosphoserine; by CK2. Ser-227 carries the phosphoserine; by PKA modification. Residue Asn-285 is glycosylated (N-linked (GlcNAc...) (complex) asparagine). Residues 371–383 (TTPSPGLQPAHLT) form an O-glycosylated at one site region.

It belongs to the serpin family. In terms of assembly, interacts with PNPLA2; this interaction stimulates the phospholipase A2 activity of PNPLA2. Post-translationally, the N-terminus is blocked. Extracellular phosphorylation enhances antiangiogenic activity. N- and O-glycosylated. O-glycosylated with a core 1 or possibly core 8 glycan. Retinal pigment epithelial cells and blood plasma.

It is found in the secreted. Its subcellular location is the melanosome. Its function is as follows. Neurotrophic protein; induces extensive neuronal differentiation in retinoblastoma cells. Potent inhibitor of angiogenesis. As it does not undergo the S (stressed) to R (relaxed) conformational transition characteristic of active serpins, it exhibits no serine protease inhibitory activity. The chain is Pigment epithelium-derived factor (SERPINF1) from Homo sapiens (Human).